The sequence spans 1030 residues: Protein KRBA1 (1030 aa).

5 disordered regions span residues 27-56 (EPGR…GQPR), 80-208 (KGAM…NSPL), 225-255 (HPET…GSPP), 281-505 (EAQD…GLEN), and 634-788 (GGPS…PASS). A Phosphoserine modification is found at serine 101. Low complexity predominate over residues 102-114 (PEAAAAREPCPLR). Polar residues predominate over residues 124–143 (PTSQPHLATTPTDSSCSSGP). Basic and acidic residues predominate over residues 157–168 (TADKPWPTRKEG). A phosphoserine mark is found at serine 177, serine 182, serine 184, serine 229, serine 253, and serine 355. Low complexity predominate over residues 372-389 (PEAQAASASSSPLEALEA). The segment covering 397–418 (NGSSPSQLPPTSCSQNPQPGDS) has biased composition (polar residues). Basic and acidic residues predominate over residues 419-437 (RSQKPELQPHRSHSEEATR). Low complexity-rich tracts occupy residues 485 to 502 (QGQH…PLQG) and 642 to 651 (PGSSSSFSGS). The segment covering 654 to 674 (EDPRPEPDLWKPLPQERDRLP) has biased composition (basic and acidic residues). The segment covering 689–698 (TPAGSSGGSP) has biased composition (gly residues). A compositionally biased stretch (pro residues) spans 760–784 (QGPPELPSESPPPELPPPEAAPPVL). The stretch at 799–832 (LQQELHSLGAALAEKLDRLATALAGLAQEVATMR) forms a coiled coil. Basic residues predominate over residues 870–887 (RHLPYWRQKGPTRPKPKI). Residues 870-1030 (RHLPYWRQKG…EHRDPRWGAH (161 aa)) are disordered. Pro residues predominate over residues 913 to 923 (PLPPDAPPAEP). Low complexity-rich tracts occupy residues 929-953 (SSSQ…LLAH) and 966-984 (PAAL…ADAD). Over residues 1019 to 1030 (GGEHRDPRWGAH) the composition is skewed to basic and acidic residues.

In terms of tissue distribution, expressed in brain (cerebellum).

The sequence is that of Protein KRBA1 (KRBA1) from Homo sapiens (Human).